Reading from the N-terminus, the 276-residue chain is Ribonuclease 3 (276 aa).

The tract at residues 1–29 (MRGTVSVPKKAEDAKADPPAKKKADTQAS) is disordered. Positions 9–25 (KKAEDAKADPPAKKKAD) are enriched in basic and acidic residues. Positions 31–157 (HTLLEGRLGY…VIGAVYLDQG (127 aa)) constitute an RNase III domain. Position 70 (glutamate 70) interacts with Mg(2+). The active site involves aspartate 74. Mg(2+)-binding residues include aspartate 143 and glutamate 146. Glutamate 146 is an active-site residue. The 69-residue stretch at 184–252 (DWKTSLQELT…AESAWRSIRA (69 aa)) folds into the DRBM domain. Residues 227-276 (YGTGTGRSKKEAEQQAAESAWRSIRAAADERAKATADAVDADPDEASASA) form a disordered region. The segment covering 265–276 (VDADPDEASASA) has biased composition (acidic residues).

Belongs to the ribonuclease III family. Homodimer. Requires Mg(2+) as cofactor.

It localises to the cytoplasm. It carries out the reaction Endonucleolytic cleavage to 5'-phosphomonoester.. Its function is as follows. Digests double-stranded RNA. Involved in the processing of primary rRNA transcript to yield the immediate precursors to the large and small rRNAs (23S and 16S). Also processes some mRNAs, and tRNAs when they are encoded in the rRNA operon. May modulate key aspects of gene expression as its absence has extensive effects on the abundance of about 200 different transcripts. Probably processes pre-crRNA and tracrRNA of type II CRISPR loci if present in the organism. This chain is Ribonuclease 3 (rnc), found in Streptomyces coelicolor (strain ATCC BAA-471 / A3(2) / M145).